The chain runs to 842 residues: Glycogen phosphorylase, muscle form (842 aa).

At S2 the chain carries N-acetylserine. S15 bears the Phosphoserine; by PHK; in form phosphorylase A mark. 2 residues coordinate AMP: D43 and Y76. 2 positions are modified to phosphotyrosine: Y204 and Y227. Residue 310-319 participates in AMP binding; sequence RRFKSSKFGC. A Phosphoserine modification is found at S430. Y473 is modified (phosphotyrosine). K681 is subject to N6-(pyridoxal phosphate)lysine. 2 positions are modified to phosphoserine: S747 and S748.

The protein belongs to the glycogen phosphorylase family. In terms of assembly, homodimer. Homotetramer; to form the enzymatically active phosphorylase A. Pyridoxal 5'-phosphate serves as cofactor. Post-translationally, phosphorylation of Ser-15 converts phosphorylase B (unphosphorylated) to phosphorylase A.

It catalyses the reaction [(1-&gt;4)-alpha-D-glucosyl](n) + phosphate = [(1-&gt;4)-alpha-D-glucosyl](n-1) + alpha-D-glucose 1-phosphate. With respect to regulation, allosterically regulated through the non-covalent binding of metabolites, being activated by AMP and inhibited by ATP, ADP, and glucose-6-phosphate. The activity is also controlled by post-translational modifications including phosphorylation. In terms of biological role, allosteric enzyme that catalyzes the rate-limiting step in glycogen catabolism, the phosphorolytic cleavage of glycogen to produce glucose-1-phosphate, and plays a central role in maintaining cellular and organismal glucose homeostasis. The polypeptide is Glycogen phosphorylase, muscle form (Bos taurus (Bovine)).